A 319-amino-acid chain; its full sequence is Acetyl-coenzyme A carboxylase carboxyl transferase subunit alpha (319 aa).

One can recognise a CoA carboxyltransferase C-terminal domain in the interval 35–296 (NIDEEVHRLR…KAQLLEDLAD (262 aa)).

Belongs to the AccA family. In terms of assembly, acetyl-CoA carboxylase is a heterohexamer composed of biotin carboxyl carrier protein (AccB), biotin carboxylase (AccC) and two subunits each of ACCase subunit alpha (AccA) and ACCase subunit beta (AccD).

It is found in the cytoplasm. The catalysed reaction is N(6)-carboxybiotinyl-L-lysyl-[protein] + acetyl-CoA = N(6)-biotinyl-L-lysyl-[protein] + malonyl-CoA. It functions in the pathway lipid metabolism; malonyl-CoA biosynthesis; malonyl-CoA from acetyl-CoA: step 1/1. Component of the acetyl coenzyme A carboxylase (ACC) complex. First, biotin carboxylase catalyzes the carboxylation of biotin on its carrier protein (BCCP) and then the CO(2) group is transferred by the carboxyltransferase to acetyl-CoA to form malonyl-CoA. The protein is Acetyl-coenzyme A carboxylase carboxyl transferase subunit alpha of Salmonella dublin (strain CT_02021853).